The primary structure comprises 336 residues: DNA polymerase III subunit delta' (336 aa).

DNA polymerase III contains a core (composed of alpha, epsilon and theta chains) that associates with a tau subunit. This core dimerizes to form the POLIII' complex. PolIII' associates with the gamma complex (composed of gamma, delta, delta', psi and chi chains) and with the beta chain to form the complete DNA polymerase III complex.

The enzyme catalyses DNA(n) + a 2'-deoxyribonucleoside 5'-triphosphate = DNA(n+1) + diphosphate. Functionally, DNA polymerase III is a complex, multichain enzyme responsible for most of the replicative synthesis in bacteria. This DNA polymerase also exhibits 3' to 5' exonuclease activity. The protein is DNA polymerase III subunit delta' (holB) of Buchnera aphidicola subsp. Baizongia pistaciae (strain Bp).